The primary structure comprises 237 residues: 4-hydroxy-tetrahydrodipicolinate reductase (237 aa).

Residues 11–16 (GASGRM), 92–94 (GTT), and 116–119 (GSNF) contribute to the NAD(+) site. His148 functions as the Proton donor/acceptor in the catalytic mechanism. Position 149 (His149) interacts with (S)-2,3,4,5-tetrahydrodipicolinate. Lys152 acts as the Proton donor in catalysis. A (S)-2,3,4,5-tetrahydrodipicolinate-binding site is contributed by 158-159 (GS).

The protein belongs to the DapB family.

It is found in the cytoplasm. It catalyses the reaction (S)-2,3,4,5-tetrahydrodipicolinate + NAD(+) + H2O = (2S,4S)-4-hydroxy-2,3,4,5-tetrahydrodipicolinate + NADH + H(+). It carries out the reaction (S)-2,3,4,5-tetrahydrodipicolinate + NADP(+) + H2O = (2S,4S)-4-hydroxy-2,3,4,5-tetrahydrodipicolinate + NADPH + H(+). The protein operates within amino-acid biosynthesis; L-lysine biosynthesis via DAP pathway; (S)-tetrahydrodipicolinate from L-aspartate: step 4/4. In terms of biological role, catalyzes the conversion of 4-hydroxy-tetrahydrodipicolinate (HTPA) to tetrahydrodipicolinate. The polypeptide is 4-hydroxy-tetrahydrodipicolinate reductase (Xylella fastidiosa (strain 9a5c)).